Here is a 409-residue protein sequence, read N- to C-terminus: Elongation factor Tu, chloroplastic (409 aa).

A tr-type G domain is found at 10 to 214; the sequence is KPHVNIGTIG…NVDSYIPTPA (205 aa). The G1 stretch occupies residues 19–26; that stretch reads GHVDHGKT. 19 to 26 serves as a coordination point for GTP; sequence GHVDHGKT. Residue Thr-26 participates in Mg(2+) binding. The tract at residues 60–64 is G2; the sequence is GITIN. Residues 81–84 form a G3 region; sequence DCPG. GTP-binding positions include 81–85 and 136–139; these read DCPGH and NKED. Residues 136–139 are G4; the sequence is NKED. Positions 174–176 are G5; sequence SAL.

Belongs to the TRAFAC class translation factor GTPase superfamily. Classic translation factor GTPase family. EF-Tu/EF-1A subfamily.

It localises to the plastid. The protein localises to the chloroplast. It carries out the reaction GTP + H2O = GDP + phosphate + H(+). In terms of biological role, GTP hydrolase that promotes the GTP-dependent binding of aminoacyl-tRNA to the A-site of ribosomes during protein biosynthesis. The protein is Elongation factor Tu, chloroplastic (tufA) of Ostreococcus tauri.